The primary structure comprises 763 residues: 1,4-alpha-glucan branching enzyme GlgB (763 aa).

The active-site Nucleophile is the Asp-437. The active-site Proton donor is the Glu-488.

The protein belongs to the glycosyl hydrolase 13 family. GlgB subfamily. Monomer.

The catalysed reaction is Transfers a segment of a (1-&gt;4)-alpha-D-glucan chain to a primary hydroxy group in a similar glucan chain.. It participates in glycan biosynthesis; glycogen biosynthesis. Catalyzes the formation of the alpha-1,6-glucosidic linkages in glycogen by scission of a 1,4-alpha-linked oligosaccharide from growing alpha-1,4-glucan chains and the subsequent attachment of the oligosaccharide to the alpha-1,6 position. The polypeptide is 1,4-alpha-glucan branching enzyme GlgB (Synechococcus sp. (strain JA-2-3B'a(2-13)) (Cyanobacteria bacterium Yellowstone B-Prime)).